Here is a 188-residue protein sequence, read N- to C-terminus: C-type lectin domain family 5 member A (188 aa).

The Cytoplasmic portion of the chain corresponds to 1 to 4; sequence MNWH. Residues 5-27 form a helical; Signal-anchor for type II membrane protein membrane-spanning segment; the sequence is MIISGLIVVVLKVVGMTLFLLYF. Over 28-188 the chain is Extracellular; that stretch reads PQIFNKSNDG…YRRICEKNAK (161 aa). The N-linked (GlcNAc...) asparagine glycan is linked to asparagine 32. A disulfide bridge links cysteine 71 with cysteine 82. Residues 78-184 enclose the C-type lectin domain; the sequence is YQARCFFLST…CDISYRRICE (107 aa). Residues asparagine 93, asparagine 144, and asparagine 151 are each glycosylated (N-linked (GlcNAc...) asparagine). Intrachain disulfides connect cysteine 99-cysteine 183 and cysteine 161-cysteine 175.

In terms of assembly, monomer. Homodimer. The majority of CLEC5A is expressed as a monomeric form on macrophages. Interacts with TYROBP/DAP12. The interaction with TYROBP is required for CLEC5A cell surface expression. Interacts with HCST/DAP10. Forms a CLEC5A/TYROBP/HCST trimolecular complex depending almost solely on TYROBP. As to quaternary structure, (Microbial infection) Interacts with dengue virus envelope protein E. Post-translationally, N-glycosylated. Contains sialic acid residues. In terms of tissue distribution, highly expressed in bone marrow with lower levels in synovium, lung and bronchus. Expressed in peripheral blood monocytes and in the monocyte/macrophage cell lines U-937 and Mono-Mac-6, but not in cell lines of other origins. Expression is down-regulated when monocytes differentiate into dendritic cells.

It is found in the cell membrane. Functions as a positive regulator of osteoclastogenesis. Cell surface receptor that signals via TYROBP. Regulates inflammatory responses. Its function is as follows. (Microbial infection) Critical macrophage receptor for dengue virus serotypes 1-4. The binding of dengue virus to CLEC5A triggers signaling through the phosphorylation of TYROBP. This interaction does not result in viral entry, but stimulates pro-inflammatory cytokine release. This is C-type lectin domain family 5 member A (CLEC5A) from Homo sapiens (Human).